We begin with the raw amino-acid sequence, 761 residues long: Xaa-Pro dipeptidyl-peptidase (761 aa).

Catalysis depends on charge relay system residues Ser-349, Asp-469, and His-499.

This sequence belongs to the peptidase S15 family. In terms of assembly, homodimer.

The protein localises to the cytoplasm. The enzyme catalyses Hydrolyzes Xaa-Pro-|- bonds to release unblocked, N-terminal dipeptides from substrates including Ala-Pro-|-p-nitroanilide and (sequentially) Tyr-Pro-|-Phe-Pro-|-Gly-Pro-|-Ile.. Removes N-terminal dipeptides sequentially from polypeptides having unsubstituted N-termini provided that the penultimate residue is proline. The polypeptide is Xaa-Pro dipeptidyl-peptidase (Streptococcus equi subsp. zooepidemicus (strain H70)).